A 511-amino-acid polypeptide reads, in one-letter code: Ribonuclease Y (511 aa).

A helical membrane pass occupies residues Val3–Ile23. Residues Thr201–Val286 form the KH domain. The region spanning Val327–Ala420 is the HD domain.

Belongs to the RNase Y family.

Its subcellular location is the cell membrane. Functionally, endoribonuclease that initiates mRNA decay. In Clostridium perfringens (strain SM101 / Type A), this protein is Ribonuclease Y.